We begin with the raw amino-acid sequence, 67 residues long: Large ribosomal subunit protein uL29 (67 aa).

The protein belongs to the universal ribosomal protein uL29 family.

The protein is Large ribosomal subunit protein uL29 of Methanosarcina acetivorans (strain ATCC 35395 / DSM 2834 / JCM 12185 / C2A).